A 315-amino-acid polypeptide reads, in one-letter code: 3-chlorobenzoate-3,4-dioxygenase reductase subunit (315 aa).

Residue 1–103 (MVAIDQHDTY…GATTRISAPR (103 aa)) participates in FMN binding. In terms of domain architecture, FAD-binding FR-type spans 7 to 109 (HDTYSVRVIS…SAPRNAFALD (103 aa)). Positions 228–315 (NEFTVNLARS…ALSPELTLDL (88 aa)) constitute a 2Fe-2S ferredoxin-type domain. Residues cysteine 264, cysteine 269, cysteine 272, and cysteine 302 each coordinate [2Fe-2S] cluster.

It belongs to the PDR/VanB family. As to quaternary structure, this dioxygenase system consists of two proteins: phthalate oxygenase and phthalate oxygenase reductase. FMN is required as a cofactor.

This is 3-chlorobenzoate-3,4-dioxygenase reductase subunit (cbaB) from Comamonas testosteroni (Pseudomonas testosteroni).